The following is a 440-amino-acid chain: Xylose isomerase (440 aa).

Residues His-100 and Asp-103 contribute to the active site. Glu-231, Glu-267, His-270, Asp-295, Asp-306, Asp-308, and Asp-338 together coordinate Mg(2+).

The protein belongs to the xylose isomerase family. As to quaternary structure, homotetramer. Requires Mg(2+) as cofactor.

The protein resides in the cytoplasm. The enzyme catalyses alpha-D-xylose = alpha-D-xylulofuranose. The sequence is that of Xylose isomerase from Paraburkholderia xenovorans (strain LB400).